The primary structure comprises 191 residues: Protein GrpE (191 aa).

Basic and acidic residues-rich tracts occupy residues 1–19 and 29–45; these read MKDEHNQEHDHLSPKEPES and QQGEEKQEASEKEGEIK. A disordered region spans residues 1 to 45; sequence MKDEHNQEHDHLSPKEPESYQKAYACKEQQGEEKQEASEKEGEIK.

It belongs to the GrpE family. As to quaternary structure, homodimer.

It localises to the cytoplasm. Functionally, participates actively in the response to hyperosmotic and heat shock by preventing the aggregation of stress-denatured proteins, in association with DnaK and GrpE. It is the nucleotide exchange factor for DnaK and may function as a thermosensor. Unfolded proteins bind initially to DnaJ; upon interaction with the DnaJ-bound protein, DnaK hydrolyzes its bound ATP, resulting in the formation of a stable complex. GrpE releases ADP from DnaK; ATP binding to DnaK triggers the release of the substrate protein, thus completing the reaction cycle. Several rounds of ATP-dependent interactions between DnaJ, DnaK and GrpE are required for fully efficient folding. The chain is Protein GrpE from Helicobacter pylori (strain J99 / ATCC 700824) (Campylobacter pylori J99).